The chain runs to 201 residues: ATP-dependent Clp protease proteolytic subunit 1 (201 aa).

The Nucleophile role is filled by Ser102. The active site involves His127.

Belongs to the peptidase S14 family. As to quaternary structure, fourteen ClpP subunits assemble into 2 heptameric rings which stack back to back to give a disk-like structure with a central cavity, resembling the structure of eukaryotic proteasomes.

Its subcellular location is the cytoplasm. The enzyme catalyses Hydrolysis of proteins to small peptides in the presence of ATP and magnesium. alpha-casein is the usual test substrate. In the absence of ATP, only oligopeptides shorter than five residues are hydrolyzed (such as succinyl-Leu-Tyr-|-NHMec, and Leu-Tyr-Leu-|-Tyr-Trp, in which cleavage of the -Tyr-|-Leu- and -Tyr-|-Trp bonds also occurs).. In terms of biological role, cleaves peptides in various proteins in a process that requires ATP hydrolysis. Has a chymotrypsin-like activity. Plays a major role in the degradation of misfolded proteins. This Mesorhizobium japonicum (strain LMG 29417 / CECT 9101 / MAFF 303099) (Mesorhizobium loti (strain MAFF 303099)) protein is ATP-dependent Clp protease proteolytic subunit 1.